The chain runs to 293 residues: Zinc metalloproteinase nas-2 (293 aa).

Positions 1–17 (MIFPLLLTLILPNFVAP) are cleaved as a signal peptide. The propeptide occupies 18-67 (KVLEPEKDDEIAVSTQREKTFFDMKLILTKLPTFEPSKYGHINIPLRKKR). The Peptidase M12A domain maps to 67–260 (RGIALHPLQW…ININTFYKCK (194 aa)). The N-linked (GlcNAc...) asparagine glycan is linked to asparagine 111. 2 disulfide bridges follow: cysteine 114-cysteine 259 and cysteine 139-cysteine 169. Position 180 (histidine 180) interacts with Zn(2+). Glutamate 181 is an active-site residue. 2 residues coordinate Zn(2+): histidine 184 and histidine 190. The N-linked (GlcNAc...) asparagine glycan is linked to asparagine 287.

Requires Zn(2+) as cofactor.

It localises to the secreted. Its function is as follows. Metalloprotease. In Caenorhabditis elegans, this protein is Zinc metalloproteinase nas-2 (nas-2).